The following is a 464-amino-acid chain: Vitamin D3 hydroxylase-associated protein (464 aa).

Residues Lys-150 and Ser-225 each act as charge relay system in the active site. Ser-249 functions as the Acyl-ester intermediate in the catalytic mechanism.

It belongs to the amidase family. In terms of tissue distribution, kidney.

It localises to the mitochondrion inner membrane. Its function is as follows. May have a vitamin D3 hydroxylase regulatory function. This chain is Vitamin D3 hydroxylase-associated protein, found in Gallus gallus (Chicken).